Reading from the N-terminus, the 2771-residue chain is Teneurin-4 (2771 aa).

Residues 1-22 (MDVKERKPYRSLTRRRDAERRY) are compositionally biased toward basic and acidic residues. The disordered stretch occupies residues 1 to 45 (MDVKERKPYRSLTRRRDAERRYTSSSADSEEGKGPQKSYSSSETL). In terms of domain architecture, Teneurin N-terminal spans 1-341 (MDVKERKPYR…KPSKYCNWKC (341 aa)). The Cytoplasmic segment spans residues 1-345 (MDVKERKPYR…YCNWKCAALS (345 aa)). S124 carries the phosphoserine modification. Residues 132-233 (WGRSTRSGRS…PPAGSAQEPT (102 aa)) form a disordered region. Positions 134-155 (RSTRSGRSSCLSSRANSNLTLT) are enriched in low complexity. The segment covering 156–166 (DTEHENTETDH) has biased composition (basic and acidic residues). T178 is subject to Phosphothreonine. Residues 191–211 (QHHAASINSLNRGNFTPRSNP) are compositionally biased toward polar residues. Residues 346-366 (AILISATLVILLAYFVAMHLF) form a helical membrane-spanning segment. The Extracellular segment spans residues 367–2771 (GLNWHLQPME…FMRQSEMGRR (2405 aa)). A disordered region spans residues 403–428 (SGGTGLETPDRKGKGAAEGKPSSLFP). Over residues 410–419 (TPDRKGKGAA) the composition is skewed to basic and acidic residues. N469 carries N-linked (GlcNAc...) asparagine glycosylation. The disordered stretch occupies residues 509-528 (ARSLEGPQRQSRGPVPPSSH). 8 EGF-like domains span residues 564-595 (SVDN…PDCG), 596-626 (RASC…AECD), 628-660 (PTNQ…ESCE), 661-692 (EVDC…TNCE), 694-727 (PRAT…HDCS), 728-759 (IEIC…ACDQ), 760-789 (RACH…EHCT), and 790-833 (IAHY…TGCD). Cystine bridges form between C568-C578, C572-C583, C585-C594, C603-C614, C616-C625, C632-C643, C637-C648, C650-C659, C664-C675, C669-C680, C682-C691, C702-C715, C717-C726, C731-C741, C735-C746, C748-C757, C762-C772, C766-C777, C779-C788, C802-C812, C806-C821, and C823-C832. Residues N942 and N1261 are each glycosylated (N-linked (GlcNAc...) asparagine). 5 NHL repeats span residues 1218-1261 (SCPS…PSGN), 1266-1310 (LEMR…VKST), 1336-1380 (TRCG…NGII), 1395-1446 (LSCD…VAGR), and 1525-1568 (CFSG…IRKN). The stretch at 1578 to 1597 (YELSSPIDQELYLFDTSGKH) is one YD 1 repeat. N-linked (GlcNAc...) asparagine glycosylation is present at N1611. YD repeat units lie at residues 1614–1634 (YTGD…VNVR), 1677–1696 (YHGN…WTTF), and 1697–1719 (YEYD…SSFR). N-linked (GlcNAc...) asparagine glycosylation is found at N1707, N1743, N1801, and N1886. YD repeat units lie at residues 1889 to 1908 (YSPG…ERME), 1930 to 1948 (YLEK…YIFE), 1949 to 1969 (FDKN…QTLE), 1976 to 1993 (YYRN…VIQD), 1994 to 2015 (FTED…VIYK), 2016 to 2033 (YGKL…TKVS), 2036 to 2056 (YDET…FTCT), 2059 to 2079 (YRQI…EGMV), 2087 to 2106 (YDNS…TPLP), 2112 to 2129 (YDDV…GVIY), 2130 to 2156 (YDIN…MKEV), 2158 to 2171 (YEIF…MTVQ), 2172 to 2195 (YDNM…TRYS), 2198 to 2218 (YDAD…WRYS), 2219 to 2239 (YDLN…LTPL), 2241 to 2261 (YDLR…DEDG), 2273 to 2293 (YNSA…SVRY), and 2295 to 2315 (YDGL…LQFF). N-linked (GlcNAc...) asparagine glycosylation occurs at N1987. N-linked (GlcNAc...) asparagine glycosylation is present at N2190. An N-linked (GlcNAc...) asparagine glycan is attached at N2330. The stretch at 2341-2382 (YDLQGHLFAMELSSGDEFYIACDNIGTPLAVFSGTGLMIKQI) is one YD 23 repeat. N-linked (GlcNAc...) asparagine glycosylation is present at N2648.

Belongs to the tenascin family. Teneurin subfamily. In terms of assembly, homodimer; disulfide-linked. May also form heterodimer with either TENM1 or TENM2 or TENM3. Expressed in brain and spinal cord (at protein level). Expressed in neurons and oligodendrocytes of the spinal cord. Expressed weakly in kidney, lung and spleen. Expressed in the cortex, CA1, CA2 and CA3 of the hippocampus. Expressed in the white matter, Purkinje cells and molecular layer of the cerebellum.

Its subcellular location is the cell membrane. It is found in the cell projection. It localises to the nucleus. The protein resides in the cytoplasm. Functionally, involved in neural development, regulating the establishment of proper connectivity within the nervous system. Plays a role in the establishment of the anterior-posterior axis during gastrulation. Regulates the differentiation and cellular process formation of oligodendrocytes and myelination of small-diameter axons in the central nervous system (CNS). Promotes activation of focal adhesion kinase. May function as a cellular signal transducer. The sequence is that of Teneurin-4 (Tenm4) from Mus musculus (Mouse).